A 106-amino-acid polypeptide reads, in one-letter code: Immunity protein CdiI (106 aa).

As to quaternary structure, forms a contact-dependent growth inhibition complex of CdiA-CT-NC101, CdiI-NC101 and EF-Tu; the complex is a dimer of heterotrimers.

In terms of biological role, immunity protein component of a toxin-immunity protein module, which functions as a cellular contact-dependent growth inhibition (CDI) system. CDI modules allow bacteria to communicate with and inhibit the growth of closely related neighboring bacteria in a contact-dependent fashion. Neutralizes the toxic activity of cognate toxin CdiA-NC101 (the C-terminal 154 residue CT fragment). Does not inhibit toxic activity of CdiA from other toxin-immunity modules or strains of E.coli. Mediates dimerization of the ternary CdiA-CT-NC101, CdiI-NC101 and EF-Tu complex; both CdiI molecules contact both EF-Tu molecules. This Escherichia coli (strain NC101) protein is Immunity protein CdiI.